Reading from the N-terminus, the 231-residue chain is 7-cyano-7-deazaguanine synthase (231 aa).

ATP is bound at residue 8-18 (FSGGQDSTTCL). Zn(2+) is bound by residues Cys188, Cys197, Cys200, and Cys203.

This sequence belongs to the QueC family. The cofactor is Zn(2+).

The enzyme catalyses 7-carboxy-7-deazaguanine + NH4(+) + ATP = 7-cyano-7-deazaguanine + ADP + phosphate + H2O + H(+). Its pathway is purine metabolism; 7-cyano-7-deazaguanine biosynthesis. Catalyzes the ATP-dependent conversion of 7-carboxy-7-deazaguanine (CDG) to 7-cyano-7-deazaguanine (preQ(0)). This chain is 7-cyano-7-deazaguanine synthase, found in Enterobacter sp. (strain 638).